A 466-amino-acid chain; its full sequence is Amino acid permease 4 (466 aa).

At Met1–Thr22 the chain is on the cytoplasmic side. Transmembrane regions (helical) follow at residues Val23–Ala43 and Trp44–Val64. The Cytoplasmic segment spans residues Thr65–Tyr111. Residues Leu112 to Ile132 traverse the membrane as a helical segment. The Extracellular segment spans residues Lys133–Leu177. The helical transmembrane segment at Ser178 to Ile198 threads the bilayer. Over Gln199–Arg226 the chain is Cytoplasmic. The chain crosses the membrane as a helical span at residues Thr227–Ile247. Residues Gln248–Arg266 lie on the Extracellular side of the membrane. Residues Ile267–Phe287 form a helical membrane-spanning segment. At Gly288–Lys290 the chain is on the cytoplasmic side. The helical transmembrane segment at Ala291–Ala311 threads the bilayer. The Extracellular segment spans residues Asn312–Ala313. A helical membrane pass occupies residues Ala314–Ile334. The Cytoplasmic portion of the chain corresponds to Glu335–Arg369. Residues Ala370–Phe390 traverse the membrane as a helical segment. Residues Asn391–Asp392 are Extracellular-facing. Residues Val393–Met413 traverse the membrane as a helical segment. The Cytoplasmic portion of the chain corresponds to Tyr414–Cys435. A helical transmembrane segment spans residues Gly436 to Leu456. The Extracellular segment spans residues Lys457–Tyr466.

This sequence belongs to the amino acid/polyamine transporter 2 family. Amino acid/auxin permease (AAAP) (TC 2.A.18.2) subfamily. Expressed in leaves, stems and flowers.

It localises to the cell membrane. With respect to regulation, inhibited by 2,4-dinitrophenol. Functionally, amino acid-proton symporter. Stereospecific transporter with a broad specificity for neutral amino acids, favoring small amino acids such as alanine, asparagine and glutamine. Also accepts large aromatic residues such as in phenlalanine or tyrosine. This Arabidopsis thaliana (Mouse-ear cress) protein is Amino acid permease 4 (AAP4).